Reading from the N-terminus, the 343-residue chain is 4-hydroxy-2-oxovalerate aldolase 2 (343 aa).

Residues 8 to 260 enclose the Pyruvate carboxyltransferase domain; sequence ITVHDMSLRD…ETGVDVFAIS (253 aa). Residue 16 to 17 participates in substrate binding; that stretch reads RD. Asp17 is a binding site for Mn(2+). Residue His20 is the Proton acceptor of the active site. The substrate site is built by Ser170 and His199. Positions 199 and 201 each coordinate Mn(2+). Position 290 (Tyr290) interacts with substrate.

The protein belongs to the 4-hydroxy-2-oxovalerate aldolase family.

It carries out the reaction (S)-4-hydroxy-2-oxopentanoate = acetaldehyde + pyruvate. The sequence is that of 4-hydroxy-2-oxovalerate aldolase 2 from Burkholderia lata (strain ATCC 17760 / DSM 23089 / LMG 22485 / NCIMB 9086 / R18194 / 383).